Here is a 160-residue protein sequence, read N- to C-terminus: SsrA-binding protein (160 aa).

Residues K135–G160 are disordered. The span at D138–G160 shows a compositional bias: basic and acidic residues.

This sequence belongs to the SmpB family.

It localises to the cytoplasm. Required for rescue of stalled ribosomes mediated by trans-translation. Binds to transfer-messenger RNA (tmRNA), required for stable association of tmRNA with ribosomes. tmRNA and SmpB together mimic tRNA shape, replacing the anticodon stem-loop with SmpB. tmRNA is encoded by the ssrA gene; the 2 termini fold to resemble tRNA(Ala) and it encodes a 'tag peptide', a short internal open reading frame. During trans-translation Ala-aminoacylated tmRNA acts like a tRNA, entering the A-site of stalled ribosomes, displacing the stalled mRNA. The ribosome then switches to translate the ORF on the tmRNA; the nascent peptide is terminated with the 'tag peptide' encoded by the tmRNA and targeted for degradation. The ribosome is freed to recommence translation, which seems to be the essential function of trans-translation. The sequence is that of SsrA-binding protein from Sphingomonas elodea.